The sequence spans 237 residues: uncharacterized protein (237 aa).

The signal sequence occupies residues 1-28 (MVFSFSTFNRLVTFTVMAAIVSVRPLTA).

This is an uncharacterized protein from Sinorhizobium fredii (strain NBRC 101917 / NGR234).